The sequence spans 405 residues: L-rhamnonate dehydratase (405 aa).

Positions 33 and 59 each coordinate substrate. 3 residues coordinate Mg(2+): D226, E252, and E280. The Proton acceptor role is filled by H329. E349 lines the substrate pocket.

The protein belongs to the mandelate racemase/muconate lactonizing enzyme family. RhamD subfamily. As to quaternary structure, homooctamer; tetramer of dimers. The cofactor is Mg(2+).

It carries out the reaction L-rhamnonate = 2-dehydro-3-deoxy-L-rhamnonate + H2O. Its function is as follows. Catalyzes the dehydration of L-rhamnonate to 2-keto-3-deoxy-L-rhamnonate (KDR). This Escherichia coli O127:H6 (strain E2348/69 / EPEC) protein is L-rhamnonate dehydratase.